A 439-amino-acid chain; its full sequence is Elongation factor Tu, mitochondrial (439 aa).

The region spanning 51–246 is the tr-type G domain; it reads KPHVNIGTIG…AVDSYITLPE (196 aa). Residues 60 to 67 form a G1 region; it reads GHVDHGKT. 60-67 lines the GTP pocket; it reads GHVDHGKT. The tract at residues 101–105 is G2; it reads GITIS. The interval 122-125 is G3; that stretch reads DCPG. GTP is bound by residues 122-126 and 177-180; these read DCPGH and NKVD. The segment at 177 to 180 is G4; sequence NKVD. The tract at residues 214 to 216 is G5; the sequence is SAL.

This sequence belongs to the TRAFAC class translation factor GTPase superfamily. Classic translation factor GTPase family. EF-Tu/EF-1A subfamily.

The protein localises to the mitochondrion. This protein promotes the GTP-dependent binding of aminoacyl-tRNA to the A-site of ribosomes during protein biosynthesis. This is Elongation factor Tu, mitochondrial (tuf1) from Schizosaccharomyces pombe (strain 972 / ATCC 24843) (Fission yeast).